Consider the following 330-residue polypeptide: Malate dehydrogenase (330 aa).

12-18 (GAAGQIG) is a binding site for NAD(+). Residues arginine 93 and arginine 99 each contribute to the substrate site. Residues asparagine 106, glutamine 113, and 130–132 (VGN) each bind NAD(+). Residues asparagine 132 and arginine 163 each coordinate substrate. Histidine 188 (proton acceptor) is an active-site residue.

It belongs to the LDH/MDH superfamily. MDH type 2 family.

It carries out the reaction (S)-malate + NAD(+) = oxaloacetate + NADH + H(+). In terms of biological role, catalyzes the reversible oxidation of malate to oxaloacetate. The chain is Malate dehydrogenase from Legionella pneumophila subsp. pneumophila (strain Philadelphia 1 / ATCC 33152 / DSM 7513).